Here is a 338-residue protein sequence, read N- to C-terminus: MIKQLCKNITICTLALSTTFTVLPATSFAKINSEIKQVSEKNLDGDTKMYTRTATTSDSQKNITQSLQFNFLTEPNYDKETVFIKAKGTIGSGLRILDPNGYWNSTLRWPGSYSVSIQNVDDNNNTNVTDFAPKNQDESREVKYTYGYKTGGDFSINRGGLTGNITKESNYSETISYQQPSYRTLLDQSTSHKGVGWKVEAHLINNMGHDHTRQLTNDSDNRTKSEIFSLTRNGNLWAKDNFTPKDKMPVTVSEGFNPEFLAVMSHDKKDKGKSQFVVHYKRSMDEFKIDWNRHGFWGYWSGENHVDKKEEKLSALYEVDWKTHNVKFVKVLNDNEKK.

The N-terminal stretch at 1–29 (MIKQLCKNITICTLALSTTFTVLPATSFA) is a signal peptide.

Belongs to the aerolysin family.

This is an uncharacterized protein from Staphylococcus aureus (strain USA300).